We begin with the raw amino-acid sequence, 111 residues long: WAP four-disulfide core domain protein 12 (111 aa).

The signal sequence occupies residues 1-23 (MRSSRFLVLMVSLALVTLVASEG). Positions 27–74 (NTEKPGVCPADNVRCIKSDPPQCHTDQDCQGIRKCCYLHCGFKCVIPV) constitute a WAP domain. Intrachain disulfides connect Cys-34/Cys-62, Cys-41/Cys-66, Cys-49/Cys-61, and Cys-55/Cys-70.

It localises to the secreted. Antibacterial protein. Putative acid-stable proteinase inhibitor. The polypeptide is WAP four-disulfide core domain protein 12 (WFDC12) (Saimiri boliviensis boliviensis (Bolivian squirrel monkey)).